The following is a 384-amino-acid chain: Chorismate synthase (384 aa).

Positions 39 and 45 each coordinate NADP(+). Residues 130–132 (RSS), 248–249 (NA), Gly292, 307–311 (KPIPT), and Arg333 each bind FMN.

It belongs to the chorismate synthase family. Homotetramer. The cofactor is FMNH2.

The catalysed reaction is 5-O-(1-carboxyvinyl)-3-phosphoshikimate = chorismate + phosphate. Its pathway is metabolic intermediate biosynthesis; chorismate biosynthesis; chorismate from D-erythrose 4-phosphate and phosphoenolpyruvate: step 7/7. In terms of biological role, catalyzes the anti-1,4-elimination of the C-3 phosphate and the C-6 proR hydrogen from 5-enolpyruvylshikimate-3-phosphate (EPSP) to yield chorismate, which is the branch point compound that serves as the starting substrate for the three terminal pathways of aromatic amino acid biosynthesis. This reaction introduces a second double bond into the aromatic ring system. The sequence is that of Chorismate synthase from Exiguobacterium sibiricum (strain DSM 17290 / CCUG 55495 / CIP 109462 / JCM 13490 / 255-15).